Reading from the N-terminus, the 251-residue chain is Imidazole glycerol phosphate synthase subunit HisF (251 aa).

Active-site residues include Asp11 and Asp130.

Belongs to the HisA/HisF family. As to quaternary structure, heterodimer of HisH and HisF.

It is found in the cytoplasm. The enzyme catalyses 5-[(5-phospho-1-deoxy-D-ribulos-1-ylimino)methylamino]-1-(5-phospho-beta-D-ribosyl)imidazole-4-carboxamide + L-glutamine = D-erythro-1-(imidazol-4-yl)glycerol 3-phosphate + 5-amino-1-(5-phospho-beta-D-ribosyl)imidazole-4-carboxamide + L-glutamate + H(+). It functions in the pathway amino-acid biosynthesis; L-histidine biosynthesis; L-histidine from 5-phospho-alpha-D-ribose 1-diphosphate: step 5/9. Functionally, IGPS catalyzes the conversion of PRFAR and glutamine to IGP, AICAR and glutamate. The HisF subunit catalyzes the cyclization activity that produces IGP and AICAR from PRFAR using the ammonia provided by the HisH subunit. The chain is Imidazole glycerol phosphate synthase subunit HisF from Chlorobaculum tepidum (strain ATCC 49652 / DSM 12025 / NBRC 103806 / TLS) (Chlorobium tepidum).